An 868-amino-acid chain; its full sequence is V-set and immunoglobulin domain-containing protein 10-like (868 aa).

The N-terminal stretch at 1–27 (MGLSWALLPFLLLAFRAELLALQPALG) is a signal peptide. The segment covering 26 to 52 (LGSQPPSASSSHSMGSSRDFVSNVSSS) has biased composition (low complexity). The interval 26 to 82 (LGSQPPSASSSHSMGSSRDFVSNVSSSQHPQPPGSEASAGIPDSNRFPQGLNSSHVP) is disordered. Residues 28-763 (SQPPSASSSH…QAGSDLSPGA (736 aa)) are Extracellular-facing. N-linked (GlcNAc...) asparagine glycosylation is found at N48, N77, and N88. A compositionally biased stretch (polar residues) spans 71–80 (RFPQGLNSSH). 2 disordered regions span residues 96 to 154 (LSPD…SGSK) and 323 to 342 (WSRD…EPPR). Polar residues-rich tracts occupy residues 99 to 108 (DVTSSETPPS) and 133 to 143 (PASQISVQTPD). Ig-like C2-type domains follow at residues 289 to 381 (PQLS…ADVS) and 389 to 474 (PVIR…SVFN). The cysteines at positions 311 and 365 are disulfide-linked. The N-linked (GlcNAc...) asparagine glycan is linked to N410. C415 and C458 are oxidised to a cystine. N-linked (GlcNAc...) asparagine glycans are attached at residues N474, N628, and N637. A helical transmembrane segment spans residues 764-784 (IAGIVLGSLLGLALLAGLLIL). Residues 785–868 (CICCLRRYPG…PWTVRAATQV (84 aa)) lie on the Cytoplasmic side of the membrane.

The protein resides in the membrane. The polypeptide is V-set and immunoglobulin domain-containing protein 10-like (Vsig10l) (Mus musculus (Mouse)).